Reading from the N-terminus, the 163-residue chain is Protein-export protein SecB (163 aa).

The protein belongs to the SecB family. As to quaternary structure, homotetramer, a dimer of dimers. One homotetramer interacts with 1 SecA dimer.

Its subcellular location is the cytoplasm. One of the proteins required for the normal export of preproteins out of the cell cytoplasm. It is a molecular chaperone that binds to a subset of precursor proteins, maintaining them in a translocation-competent state. It also specifically binds to its receptor SecA. In Brucella anthropi (strain ATCC 49188 / DSM 6882 / CCUG 24695 / JCM 21032 / LMG 3331 / NBRC 15819 / NCTC 12168 / Alc 37) (Ochrobactrum anthropi), this protein is Protein-export protein SecB.